Consider the following 342-residue polypeptide: Adenylate isopentenyltransferase 6, chloroplastic (342 aa).

A chloroplast-targeting transit peptide spans 1-33 (MQQLMTLLSPPLSHSSLLPTVTTKFGSPRLVTT). Residue 52–59 (GTTGTGKS) coordinates ATP.

This sequence belongs to the IPP transferase family. Expressed in siliques, at the mRNA level.

The protein resides in the plastid. Its subcellular location is the chloroplast. The enzyme catalyses dimethylallyl diphosphate + ADP = N(6)-(dimethylallyl)adenosine 5'-diphosphate + diphosphate. It carries out the reaction dimethylallyl diphosphate + ATP = N(6)-(dimethylallyl)adenosine 5'-triphosphate + diphosphate. In terms of biological role, involved in cytokinin biosynthesis. Catalyzes the transfer of an isopentenyl group from dimethylallyl diphosphate (DMAPP) to ATP and ADP. The polypeptide is Adenylate isopentenyltransferase 6, chloroplastic (IPT6) (Arabidopsis thaliana (Mouse-ear cress)).